The following is a 466-amino-acid chain: Asparagine--tRNA ligase (466 aa).

This sequence belongs to the class-II aminoacyl-tRNA synthetase family. Homodimer.

The protein resides in the cytoplasm. It catalyses the reaction tRNA(Asn) + L-asparagine + ATP = L-asparaginyl-tRNA(Asn) + AMP + diphosphate + H(+). The sequence is that of Asparagine--tRNA ligase from Vibrio parahaemolyticus serotype O3:K6 (strain RIMD 2210633).